A 227-amino-acid chain; its full sequence is ATP synthase F(0) complex subunit a (227 aa).

6 helical membrane passes run 14 to 34 (FLGI…FPSP), 69 to 89 (WAMI…LGLL), 98 to 118 (QLSM…LIGM), 139 to 159 (IPIL…ALGV), 165 to 185 (LTAG…MLSI), and 189 to 209 (IATL…AVAM).

The protein belongs to the ATPase A chain family. As to quaternary structure, component of the ATP synthase complex composed at least of ATP5F1A/subunit alpha, ATP5F1B/subunit beta, ATP5MC1/subunit c (homooctomer), MT-ATP6/subunit a, MT-ATP8/subunit 8, ATP5ME/subunit e, ATP5MF/subunit f, ATP5MG/subunit g, ATP5MK/subunit k, ATP5MJ/subunit j, ATP5F1C/subunit gamma, ATP5F1D/subunit delta, ATP5F1E/subunit epsilon, ATP5PF/subunit F6, ATP5PB/subunit b, ATP5PD/subunit d, ATP5PO/subunit OSCP. ATP synthase complex consists of a soluble F(1) head domain (subunits alpha(3) and beta(3)) - the catalytic core - and a membrane F(0) domain - the membrane proton channel (subunits c, a, 8, e, f, g, k and j). These two domains are linked by a central stalk (subunits gamma, delta, and epsilon) rotating inside the F1 region and a stationary peripheral stalk (subunits F6, b, d, and OSCP). Interacts with DNAJC30; interaction is direct.

It is found in the mitochondrion inner membrane. The catalysed reaction is H(+)(in) = H(+)(out). Functionally, subunit a, of the mitochondrial membrane ATP synthase complex (F(1)F(0) ATP synthase or Complex V) that produces ATP from ADP in the presence of a proton gradient across the membrane which is generated by electron transport complexes of the respiratory chain. ATP synthase complex consist of a soluble F(1) head domain - the catalytic core - and a membrane F(1) domain - the membrane proton channel. These two domains are linked by a central stalk rotating inside the F(1) region and a stationary peripheral stalk. During catalysis, ATP synthesis in the catalytic domain of F(1) is coupled via a rotary mechanism of the central stalk subunits to proton translocation. With the subunit c (ATP5MC1), forms the proton-conducting channel in the F(0) domain, that contains two crucial half-channels (inlet and outlet) that facilitate proton movement from the mitochondrial intermembrane space (IMS) into the matrix. Protons are taken up via the inlet half-channel and released through the outlet half-channel, following a Grotthuss mechanism. This chain is ATP synthase F(0) complex subunit a, found in Polypterus ornatipinnis (Ornate bichir).